A 382-amino-acid polypeptide reads, in one-letter code: Regulatory protein RapC (382 aa).

TPR repeat units follow at residues 102 to 138, 149 to 182, 183 to 216, 223 to 256, and 263 to 296; these read YYVN…VADH, AEAY…NVRI, IQCH…AQAE, GRAY…FESS, and PQAY…AKET.

Belongs to the Rap family. In terms of assembly, homodimer. Interacts specifically with the C-terminal DNA-binding domain of ComA. Interacts with CSF.

The protein resides in the cytoplasm. Its activity is regulated as follows. Inhibited by the competence and sporulation stimulating factor (CSF), encoded by phrC, which prevents RapC-ComA interaction. Its function is as follows. Involved in the regulation of genetic competence development. Inhibits the activity of ComA, a transcriptional factor that regulates the development of genetic competence. Acts by binding to ComA, independently of its phosphorylation state, leading to the inhibition of ComA DNA-binding activity. Does not dephosphorylate phospho-ComA and does not affect the phosphorylation level of the ComP-ComA system. The sequence is that of Regulatory protein RapC (rapC) from Bacillus subtilis (strain 168).